A 176-amino-acid chain; its full sequence is uncharacterized protein (176 aa).

The interval 71–176 (RDDMSSDSDG…YSTDDDEDDY (106 aa)) is disordered. Composition is skewed to low complexity over residues 77 to 87 (DSDGPAASPPG) and 100 to 109 (SYSSSDSSAR). Positions 140–152 (KARRPARKKKRIG) are enriched in basic residues.

This is an uncharacterized protein from Orgyia pseudotsugata multicapsid polyhedrosis virus (OpMNPV).